The chain runs to 463 residues: Phosphoglucosamine mutase (463 aa).

The Phosphoserine intermediate role is filled by serine 102. Mg(2+) contacts are provided by serine 102, aspartate 240, aspartate 242, and aspartate 244. Serine 102 carries the post-translational modification Phosphoserine.

Belongs to the phosphohexose mutase family. It depends on Mg(2+) as a cofactor. In terms of processing, activated by phosphorylation.

The catalysed reaction is alpha-D-glucosamine 1-phosphate = D-glucosamine 6-phosphate. In terms of biological role, catalyzes the conversion of glucosamine-6-phosphate to glucosamine-1-phosphate. The chain is Phosphoglucosamine mutase from Mycobacterium leprae (strain Br4923).